A 320-amino-acid polypeptide reads, in one-letter code: Cytochrome f (320 aa).

A signal peptide spans 1 to 35 (MQTRNAFSWIKKEITRSISVLLMIYIITRAPISNA). Y36, C56, C59, and H60 together coordinate heme. The chain crosses the membrane as a helical span at residues 286 to 305 (VQGLLLFLASIILAQIFLVL).

It belongs to the cytochrome f family. In terms of assembly, the 4 large subunits of the cytochrome b6-f complex are cytochrome b6, subunit IV (17 kDa polypeptide, petD), cytochrome f and the Rieske protein, while the 4 small subunits are PetG, PetL, PetM and PetN. The complex functions as a dimer. Requires heme as cofactor.

It is found in the plastid. Its subcellular location is the chloroplast thylakoid membrane. Component of the cytochrome b6-f complex, which mediates electron transfer between photosystem II (PSII) and photosystem I (PSI), cyclic electron flow around PSI, and state transitions. The protein is Cytochrome f (petA) of Vicia faba (Broad bean).